Reading from the N-terminus, the 101-residue chain is NAD(P)H-quinone oxidoreductase subunit 4L, chloroplastic (101 aa).

A run of 3 helical transmembrane segments spans residues Ile2–Ile22, Met32–Phe52, and Ile61–Val81.

It belongs to the complex I subunit 4L family. As to quaternary structure, NDH is composed of at least 16 different subunits, 5 of which are encoded in the nucleus.

It localises to the plastid. Its subcellular location is the chloroplast thylakoid membrane. It catalyses the reaction a plastoquinone + NADH + (n+1) H(+)(in) = a plastoquinol + NAD(+) + n H(+)(out). The enzyme catalyses a plastoquinone + NADPH + (n+1) H(+)(in) = a plastoquinol + NADP(+) + n H(+)(out). Functionally, NDH shuttles electrons from NAD(P)H:plastoquinone, via FMN and iron-sulfur (Fe-S) centers, to quinones in the photosynthetic chain and possibly in a chloroplast respiratory chain. The immediate electron acceptor for the enzyme in this species is believed to be plastoquinone. Couples the redox reaction to proton translocation, and thus conserves the redox energy in a proton gradient. The chain is NAD(P)H-quinone oxidoreductase subunit 4L, chloroplastic from Arabis hirsuta (Hairy rock-cress).